We begin with the raw amino-acid sequence, 198 residues long: 3-isopropylmalate dehydratase small subunit (198 aa).

The protein belongs to the LeuD family. LeuD type 1 subfamily. Heterodimer of LeuC and LeuD.

The catalysed reaction is (2R,3S)-3-isopropylmalate = (2S)-2-isopropylmalate. Its pathway is amino-acid biosynthesis; L-leucine biosynthesis; L-leucine from 3-methyl-2-oxobutanoate: step 2/4. Its function is as follows. Catalyzes the isomerization between 2-isopropylmalate and 3-isopropylmalate, via the formation of 2-isopropylmaleate. The sequence is that of 3-isopropylmalate dehydratase small subunit from Mycobacterium leprae (strain Br4923).